The following is a 200-amino-acid chain: Probable GTP-binding protein EngB (200 aa).

Residues 22–197 (NLPEYAFIGR…LDYIDSINRS (176 aa)) form the EngB-type G domain. Residues 30-37 (GRSNVGKS), 57-61 (GKTLL), 75-78 (DLPG), 142-145 (TKAD), and 173-178 (HFVSSS) contribute to the GTP site. Ser-37 and Thr-59 together coordinate Mg(2+).

Belongs to the TRAFAC class TrmE-Era-EngA-EngB-Septin-like GTPase superfamily. EngB GTPase family. It depends on Mg(2+) as a cofactor.

Necessary for normal cell division and for the maintenance of normal septation. This Phocaeicola vulgatus (strain ATCC 8482 / DSM 1447 / JCM 5826 / CCUG 4940 / NBRC 14291 / NCTC 11154) (Bacteroides vulgatus) protein is Probable GTP-binding protein EngB.